Here is a 790-residue protein sequence, read N- to C-terminus: N-methylputrescine oxidase 1, peroxisomal (790 aa).

The interval 1-23 (MATTKQKVTAPSPSPSSSTASCC) is disordered. The segment covering 9-23 (TAPSPSPSSSTASCC) has biased composition (low complexity). Residue 423–434 (AFDAGEDGLGKN) coordinates substrate. The Proton acceptor role is filled by aspartate 425. A disulfide bond links cysteine 444 and cysteine 470. 506 to 511 (VANYEY) contributes to the substrate binding site. Tyrosine 509 (schiff-base intermediate with substrate; via topaquinone) is an active-site residue. Tyrosine 509 is subject to 2',4',5'-topaquinone. Cu cation-binding residues include histidine 559 and histidine 561. Aspartate 714 and isoleucine 715 together coordinate Mn(2+). A Cu cation-binding site is contributed by histidine 725.

Belongs to the copper/topaquinone oxidase family. In terms of assembly, homodimer. Requires Cu cation as cofactor. Zn(2+) is required as a cofactor. L-topaquinone serves as cofactor. In terms of processing, topaquinone (TPQ) is generated by copper-dependent autoxidation of a specific tyrosyl residue. As to expression, mainly expressed in roots, and, to a lower extent, in stems.

Its subcellular location is the peroxisome. The catalysed reaction is a primary methyl amine + O2 + H2O = an aldehyde + H2O2 + NH4(+). It catalyses the reaction N-methylputrescine + O2 + H2O = 4-methylaminobutanal + H2O2 + NH4(+). It participates in alkaloid biosynthesis; nicotine biosynthesis. Functionally, involved in the biosynthesis of pyridine alkaloid natural products, leading mainly to the production of anabasine, anatabine, nicotine and nornicotine, effective deterrents against herbivores with antiparasitic and pesticide properties (neurotoxins); nornicotine serves as the precursor in the synthesis of the carcinogen compound N'-nitrosonornicotine (NNN). Amine oxidase which mediates the deamination of N-methylputrescine to produce 4-methylaminobutanal. Oxidizes preferentially N-methylated amines. The sequence is that of N-methylputrescine oxidase 1, peroxisomal from Nicotiana tabacum (Common tobacco).